Reading from the N-terminus, the 229-residue chain is MSQPRPLLSPPETEEQLLAQAQQLSGYTLGELAALAGLVTPENLKRDKGWIGVLLEIWLGASAGSKPEQDFAALGVELKTIPVDSLGRPLETTFVCVAPLTGNSGVTWETSHVRHKLKRVLWIPVEGERSIPLAKRRVGSPLLWSPNEEEDQQLREDWEELMDMIVLGQIERITARHGEYLQIRPKAANAKALTEAIGARGERILTLPRGFYLKKNFTSALLARHFLIQ.

Belongs to the MutH family.

The protein resides in the cytoplasm. In terms of biological role, sequence-specific endonuclease that cleaves unmethylated GATC sequences. It is involved in DNA mismatch repair. This chain is DNA mismatch repair protein MutH, found in Escherichia coli O127:H6 (strain E2348/69 / EPEC).